We begin with the raw amino-acid sequence, 730 residues long: MGRRKKMVERVTTLMNDPQRIRNIGIVAHIDHGKTTLSDNLLAGAGMISKELAGKQLFMDSDEEEQARGITIDSSNVSMVHTFDNEDYLINLIDTPGHVDFGGDVTRAMRAVDGAVVVVDAVEGTMPQTETVLRQALREHVRPVLFVNKVDRLINELQVDSQEMQIRLGKVIDHVNKLIKNMNPEKFKAGWKVDAAAGTVAFGSALYNWAISVPMMKKTGVSFKDVYDYCKAGDMKSLAEKCPLHEAVLDMVIHFLPNPIEAQKGRVKVIWHGDENTEIGKAMTHANAEGDLAFMVTDISVDPHAGEVATGRLFSGSLTRGMEVFTSGSARKSRVQQVGIFMGPERLEVDKIPAGNIAAVTGLKEAIVGSTVTTLDGMTPFESIRHVSEPVVTVAVEAKHTKDLPKLIEVLRQVAKEDPTLQITLDEETGEHLMAGMGELHLEVIAHRIERDKNVEITTSKPIVVYRETIKKKTEPIEGKSPNRHNRFYIYAEPLDTEIVSAIKEGEVSMNLPELERRQKLIDLGMEKEEAKGIVGIFNSNIFIDMTKGIQYLNETMELVLDGFEEVMRAGPLTREPVANVKCVLVDAKLHEDAIHRGPAQIIPAARQAIQAGMLMAEDSLLEPYQKVFVQVPQLLMGGATKELQGRRGIILNMTTEGDLAIIEARVPVAEMFGFAGEIRSATEGRAMWSTEFGGFDVVPSSILNDIVGQIRERKGLKKELPKASDFLSM.

The tr-type G domain maps to 19 to 228 (QRIRNIGIVA…TGVSFKDVYD (210 aa)). GTP is bound by residues 28-35 (AHIDHGKT), 94-98 (DTPGH), and 148-151 (NKVD). Diphthamide is present on His596.

Belongs to the TRAFAC class translation factor GTPase superfamily. Classic translation factor GTPase family. EF-G/EF-2 subfamily.

It is found in the cytoplasm. Catalyzes the GTP-dependent ribosomal translocation step during translation elongation. During this step, the ribosome changes from the pre-translocational (PRE) to the post-translocational (POST) state as the newly formed A-site-bound peptidyl-tRNA and P-site-bound deacylated tRNA move to the P and E sites, respectively. Catalyzes the coordinated movement of the two tRNA molecules, the mRNA and conformational changes in the ribosome. The chain is Elongation factor 2 from Methanosarcina acetivorans (strain ATCC 35395 / DSM 2834 / JCM 12185 / C2A).